A 177-amino-acid polypeptide reads, in one-letter code: Large ribosomal subunit protein bL17 (177 aa).

The tract at residues 136-177 (AEEEAPAVEAEATEAVEAPVEETAAAEAEAPAEEAADAEKAE) is disordered. The segment covering 138-149 (EEAPAVEAEATE) has biased composition (acidic residues). Over residues 150-164 (AVEAPVEETAAAEAE) the composition is skewed to low complexity.

This sequence belongs to the bacterial ribosomal protein bL17 family. In terms of assembly, part of the 50S ribosomal subunit. Contacts protein L32.

The protein is Large ribosomal subunit protein bL17 of Bifidobacterium longum (strain NCC 2705).